The primary structure comprises 256 residues: Probable aquaporin TIP-type alpha (256 aa).

Residues 1–24 lie on the Cytoplasmic side of the membrane; that stretch reads MATRRYSFGRTDEATHPDSMRASL. Ser-7 is modified (phosphoserine; by CPK). The chain crosses the membrane as a helical span at residues 25–44; it reads AEFASTFIFVFAGEGSGLAL. The Vacuolar segment spans residues 45–57; it reads VKIYQDSAFSAGE. The chain crosses the membrane as a helical span at residues 58-77; that stretch reads LLALALAHAFALFAAVSASM. Topologically, residues 78–102 are cytoplasmic; it reads HVSGGHVNPAVSFGALIGGRISVIR. Positions 85–87 match the NPA 1 motif; sequence NPA. A helical membrane pass occupies residues 103-121; the sequence is AVYYWIAQLLGSIVAALVL. The Vacuolar portion of the chain corresponds to 122–143; the sequence is RLVTNNMRPSGFHVSPGVGVGH. The helical transmembrane segment at 144 to 164 threads the bilayer; sequence MFILEVVMTFGLMYTVYGTAI. At 165 to 169 the chain is on the cytoplasmic side; that stretch reads DPKRG. Residues 170–189 form a helical membrane-spanning segment; that stretch reads AVSYIAPLAIGLIVGANILV. Over 190-216 the chain is Vacuolar; sequence GGPFDGACMNPALAFGPSLVGWQWHQH. The NPA 2 motif lies at 199–201; it reads NPA. A helical transmembrane segment spans residues 217–239; that stretch reads WIFWVGPLLGAALAALVYEYAVI. The Cytoplasmic segment spans residues 240 to 256; that stretch reads PIEPPPHHHQPLATEDY.

Belongs to the MIP/aquaporin (TC 1.A.8) family. TIP (TC 1.A.8.10) subfamily. Post-translationally, phosphorylated by a tonoplast-bound calcium-dependent protein kinase. In terms of tissue distribution, found in all seed tissues that are alive at seed maturity, but not in tissues that lose viability during seed maturation.

Its subcellular location is the vacuole membrane. In terms of biological role, channel protein in tonoplast. These proteins may allow the diffusion of amino acids and/or peptides from the vacuolar compartment to the cytoplasm. In Phaseolus vulgaris (Kidney bean), this protein is Probable aquaporin TIP-type alpha.